We begin with the raw amino-acid sequence, 407 residues long: Phosphopentomutase (407 aa).

6 residues coordinate Mn(2+): D10, D306, H311, D347, H348, and H359.

It belongs to the phosphopentomutase family. Mn(2+) is required as a cofactor.

Its subcellular location is the cytoplasm. It catalyses the reaction 2-deoxy-alpha-D-ribose 1-phosphate = 2-deoxy-D-ribose 5-phosphate. The catalysed reaction is alpha-D-ribose 1-phosphate = D-ribose 5-phosphate. It functions in the pathway carbohydrate degradation; 2-deoxy-D-ribose 1-phosphate degradation; D-glyceraldehyde 3-phosphate and acetaldehyde from 2-deoxy-alpha-D-ribose 1-phosphate: step 1/2. In terms of biological role, isomerase that catalyzes the conversion of deoxy-ribose 1-phosphate (dRib-1-P) and ribose 1-phosphate (Rib-1-P) to deoxy-ribose 5-phosphate (dRib-5-P) and ribose 5-phosphate (Rib-5-P), respectively. The protein is Phosphopentomutase of Cronobacter sakazakii (strain ATCC BAA-894) (Enterobacter sakazakii).